Here is a 230-residue protein sequence, read N- to C-terminus: Complex I assembly factor TMEM126B, mitochondrial (230 aa).

4 consecutive transmembrane segments (helical) span residues 70-92 (LNIH…ANLV), 107-126 (YASL…KLFV), 139-161 (SCVL…ALAF), and 196-218 (AMAI…HYNI).

The protein belongs to the TMEM126 family. In terms of assembly, part of the mitochondrial complex I assembly/MCIA complex that comprises at least the core subunits TMEM126B, NDUFAF1, ECSIT and ACAD9 and complement subunits such as COA1 and TMEM186. Associates with the intermediate 370 kDa subcomplex of incompletely assembled complex I. Interacts with TMEM70.

It is found in the mitochondrion membrane. As part of the MCIA complex, involved in the assembly of the mitochondrial complex I. Participates in constructing the membrane arm of complex I. The polypeptide is Complex I assembly factor TMEM126B, mitochondrial (Mus musculus (Mouse)).